Reading from the N-terminus, the 500-residue chain is Nuclear distribution protein PAC1 (500 aa).

WD repeat units lie at residues 125–164 (HNGH…EPQQ), 169–219 (AHTR…NLKA), 225–265 (GHEN…IVLS), 268–310 (GHSN…LMIG), 338–378 (QNEL…IRSD), 397–436 (EHKS…ESNL), and 459–500 (IKDQ…EYIL).

This sequence belongs to the WD repeat LIS1/nudF family. As to quaternary structure, self-associates. Interacts with NDL1 and dynein.

It is found in the cytoplasm. It localises to the cytoskeleton. Its subcellular location is the spindle pole. In terms of biological role, positively regulates the activity of the minus-end directed microtubule motor protein dynein. Plays a central role in positioning the mitotic spindle at the bud neck during cell division. Targets cytoplasmic dynein to microtubule plus ends, thereby promoting dynein-mediated microtubule sliding along the bud cortex and consequently the movement of the mitotic spindle to the bud neck. The polypeptide is Nuclear distribution protein PAC1 (Komagataella phaffii (strain GS115 / ATCC 20864) (Yeast)).